An 85-amino-acid chain; its full sequence is Contulakin-Lt1 (85 aa).

Residues 1–22 (MRTAYWVMVMMMVGITAPLSEG) form the signal peptide. Positions 23-60 (RKLNDAIRGLVADYLTPQLLQSLVSAPYPEFQLDDPNL) are excised as a propeptide. Cys65 and Cys70 form a disulfide bridge. Positions 76–85 (RRRDLKKRNK) are excised as a propeptide.

Belongs to the conotoxin C superfamily. Expressed by the venom duct.

It localises to the secreted. In terms of biological role, acts as an agonist of neurotensin receptors. It binds to human neurotensin type 1 receptor (NTSR1), rat neurotensin types 1 and 2 receptors (NTSR1/NTSR2) and mouse neurotensin type 3 receptor (SORT1). This is Contulakin-Lt1 from Conus litteratus (Lettered cone).